Reading from the N-terminus, the 519-residue chain is Histidine--tRNA ligase (519 aa).

Belongs to the class-II aminoacyl-tRNA synthetase family. As to quaternary structure, homodimer.

It localises to the cytoplasm. The catalysed reaction is tRNA(His) + L-histidine + ATP = L-histidyl-tRNA(His) + AMP + diphosphate + H(+). This chain is Histidine--tRNA ligase, found in Rhodopseudomonas palustris (strain BisB18).